The primary structure comprises 144 residues: Universal stress protein F (144 aa).

The protein belongs to the universal stress protein A family. In terms of assembly, homodimer.

The protein is Universal stress protein F (uspF) of Escherichia coli (strain K12).